The sequence spans 205 residues: Dephospho-CoA kinase (205 aa).

In terms of domain architecture, DPCK spans 3–204 (KVGLTGGIGA…HRAHQPGESQ (202 aa)). 11–16 (GAGKSE) is an ATP binding site.

It belongs to the CoaE family.

Its subcellular location is the cytoplasm. It carries out the reaction 3'-dephospho-CoA + ATP = ADP + CoA + H(+). Its pathway is cofactor biosynthesis; coenzyme A biosynthesis; CoA from (R)-pantothenate: step 5/5. Its function is as follows. Catalyzes the phosphorylation of the 3'-hydroxyl group of dephosphocoenzyme A to form coenzyme A. This chain is Dephospho-CoA kinase, found in Streptomyces avermitilis (strain ATCC 31267 / DSM 46492 / JCM 5070 / NBRC 14893 / NCIMB 12804 / NRRL 8165 / MA-4680).